A 173-amino-acid polypeptide reads, in one-letter code: Protein SHI RELATED SEQUENCE 8 (173 aa).

Residues C52, C63, C68, C72, and C79 each contribute to the Zn(2+) site. Residues 52–79 (CQDFGNQAKKDCSHMRCRTCCKSRGFEC) constitute a DNA-binding region (zn(2)-C6 fungal-type; degenerate). The segment covering 100–110 (LATVQPQTQLP) has biased composition (low complexity). Positions 100-121 (LATVQPQTQLPRGESVPKRHRE) are disordered.

Belongs to the SHI protein family.

It is found in the nucleus. Its function is as follows. Transcription activator that binds DNA on 5'-ACTCTAC-3' and promotes auxin homeostasis-regulating gene expression (e.g. YUC genes), as well as genes affecting stamen development, cell expansion and timing of flowering. Synergistically with other SHI-related proteins, regulates gynoecium, stamen and leaf development in a dose-dependent manner, controlling apical-basal patterning. Promotes style and stigma formation, and influence vascular development during gynoecium development. May also have a role in the formation and/or maintenance of the shoot apical meristem (SAM). This chain is Protein SHI RELATED SEQUENCE 8 (SRS8), found in Arabidopsis thaliana (Mouse-ear cress).